Reading from the N-terminus, the 443-residue chain is UDP-N-acetylmuramate--L-alanine ligase (443 aa).

Residue 110–116 (GAHGKTS) coordinates ATP.

It belongs to the MurCDEF family.

It localises to the cytoplasm. It carries out the reaction UDP-N-acetyl-alpha-D-muramate + L-alanine + ATP = UDP-N-acetyl-alpha-D-muramoyl-L-alanine + ADP + phosphate + H(+). Its pathway is cell wall biogenesis; peptidoglycan biosynthesis. In terms of biological role, cell wall formation. The protein is UDP-N-acetylmuramate--L-alanine ligase of Streptococcus agalactiae serotype III (strain NEM316).